The following is a 313-amino-acid chain: MRFKGLDLNLLVALDALMTKRSVTAAARSINLSQPAMSSAIARLRSYFQDELFRMQGRELITTPRAEALAPAIRDALLHIQFSIISWDMFNPAQSDRCFRIILSDFMTLVFFEKVVERVAREAPGVSFELLPPDDNPDELLRRGEVDFLIFPDVFMSSVHPKAKLFDQTLVSVGCLTNEQLLGDLSFERYMSMGHVAAQFGRALKPSVEQWLLLEHGYKRRIELVVPGFNLIPPLLSGTKRIAIIPLRLANHFAKSIPLRIVKHPLPLLSFTEAVQWPALHNKDQASIWMREILLDEAARIAAPRETAGCLGR.

The HTH lysR-type domain maps to 6-63; it reads LDLNLLVALDALMTKRSVTAAARSINLSQPAMSSAIARLRSYFQDELFRMQGRELITT. The segment at residues 23 to 42 is a DNA-binding region (H-T-H motif); sequence VTAAARSINLSQPAMSSAIA.

The protein belongs to the LysR transcriptional regulatory family.

Its function is as follows. NodD regulates the expression of the nodABCFE genes which encode other nodulation proteins. NodD is also a negative regulator of its own expression. Binds flavonoids as inducers. This is Nodulation protein D 3 (nodD3) from Rhizobium meliloti (strain 1021) (Ensifer meliloti).